The following is a 630-amino-acid chain: 1-deoxy-D-xylulose-5-phosphate synthase (630 aa).

Thiamine diphosphate-binding positions include His72 and 113–115 (GHS). Asp144 provides a ligand contact to Mg(2+). Thiamine diphosphate contacts are provided by residues 145–146 (GA), Asn173, Tyr284, and Glu367. Asn173 contributes to the Mg(2+) binding site.

The protein belongs to the transketolase family. DXPS subfamily. In terms of assembly, homodimer. It depends on Mg(2+) as a cofactor. Thiamine diphosphate serves as cofactor.

It catalyses the reaction D-glyceraldehyde 3-phosphate + pyruvate + H(+) = 1-deoxy-D-xylulose 5-phosphate + CO2. The protein operates within metabolic intermediate biosynthesis; 1-deoxy-D-xylulose 5-phosphate biosynthesis; 1-deoxy-D-xylulose 5-phosphate from D-glyceraldehyde 3-phosphate and pyruvate: step 1/1. Functionally, catalyzes the acyloin condensation reaction between C atoms 2 and 3 of pyruvate and glyceraldehyde 3-phosphate to yield 1-deoxy-D-xylulose-5-phosphate (DXP). The chain is 1-deoxy-D-xylulose-5-phosphate synthase from Bacillus cereus (strain G9842).